The chain runs to 417 residues: E3 ubiquitin-protein ligase RNF135 (417 aa).

An RING-type zinc finger spans residues 21 to 67; that stretch reads CIICQGLLDQPTTLPCGHSFCLRCLHDLWVSKRGAVDGCPWACPICR. 2 disordered regions span residues 95-118 and 143-173; these read EVEA…TVQK and TQRP…SLDS. 2 coiled-coil regions span residues 121 to 145 and 180 to 204; these read TNVI…QTQR and SISQ…QGSV. Positions 143-164 are enriched in polar residues; it reads TQRPNLGSGQDNAQGTPPTDSS. The 193-residue stretch at 225–417 folds into the B30.2/SPRY domain; the sequence is PDQRRPAPRK…NYLEIKQLNT (193 aa).

As to quaternary structure, homodimer. Interacts (homodimer) with RIGI (double-stranded RNA-bound oligomeric form); involved in both RIGI ubiquitination, oligomerization into filaments associated with viral RNAs and the bridging of these filaments. Interacts with UBE2D3 and UBE2N; E2 ubiquitin ligases involved in RNF135-mediated ubiquitination of RIGI and activation of the RIG-I signaling pathway. Interacts with PCBP2. Ubiquitously expressed.

It localises to the cytoplasm. Its subcellular location is the stress granule. It carries out the reaction S-ubiquitinyl-[E2 ubiquitin-conjugating enzyme]-L-cysteine + [acceptor protein]-L-lysine = [E2 ubiquitin-conjugating enzyme]-L-cysteine + N(6)-ubiquitinyl-[acceptor protein]-L-lysine.. The protein operates within protein modification; protein ubiquitination. Its function is as follows. E2-dependent E3 ubiquitin-protein ligase that functions as a RIGI coreceptor in the sensing of viral RNAs in cell cytoplasm and the activation of the antiviral innate immune response. Together with the UBE2D3, UBE2N and UB2V1 E2 ligases, catalyzes the 'Lys-63'-linked polyubiquitination of RIGI oligomerized on viral RNAs, an essential step in the activation of the RIG-I signaling pathway. Through a ubiquitin-independent parallel mechanism, which consists in bridging RIGI filaments forming on longer viral RNAs, further activates the RIG-I signaling pathway. This second mechanism that synergizes with the ubiquitin-dependent one would thereby allow an RNA length-dependent regulation of the RIG-I signaling pathway. Associated with the E2 ligase UBE2N, also constitutively synthesizes unanchored 'Lys-63'-linked polyubiquitin chains that may also activate the RIG-I signaling pathway. It is not involved in the innate immune response against DNA viruses. The chain is E3 ubiquitin-protein ligase RNF135 from Mus musculus (Mouse).